The following is a 473-amino-acid chain: Glutamine synthetase (473 aa).

The GS beta-grasp domain maps to 15-100; it reads ENIKIIDLKF…ICSIKEPRTG (86 aa). The 367-residue stretch at 107–473 folds into the GS catalytic domain; that stretch reads PRTIAAKAVE…PYEFSLYYDC (367 aa). Glu-132 contributes to the Mn(2+) binding site. Glu-134 provides a ligand contact to Mg(2+). Residue Glu-210 coordinates ATP. The Mg(2+) site is built by Glu-215 and Glu-223. Residues 267–268 and Gly-268 contribute to the L-glutamate site; that span reads NG. His-272 lines the Mg(2+) pocket. Residues 274-276 and Ser-276 each bind ATP; that span reads HQS. L-glutamate is bound by residues Arg-324, Glu-330, and Arg-342. ATP-binding residues include Arg-342, Arg-347, and Lys-356. Glu-361 lines the Mn(2+) pocket. Arg-363 contacts L-glutamate. Tyr-401 carries the post-translational modification O-AMP-tyrosine.

The protein belongs to the glutamine synthetase family. As to quaternary structure, oligomer of 12 subunits arranged in the form of two hexagons. Mg(2+) is required as a cofactor.

Its subcellular location is the cytoplasm. The enzyme catalyses L-glutamate + NH4(+) + ATP = L-glutamine + ADP + phosphate + H(+). Inhibited by ADP (90%), AMP (80%), alanine (52%) and aspartate (41%). The activity of this enzyme could be controlled by adenylation under conditions of abundant glutamine. Functionally, involved in nitrogen metabolism via ammonium assimilation. Catalyzes the ATP-dependent biosynthesis of glutamine from glutamate and ammonia. The sequence is that of Glutamine synthetase from Synechocystis sp. (strain ATCC 27184 / PCC 6803 / Kazusa).